Consider the following 3583-residue polypeptide: Surfactin synthase subunit 2 (3583 aa).

3 Carrier domains span residues 965–1039 (APKT…EENE), 2005–2080 (APET…EASA), and 3034–3108 (APTT…ERAE). S999, S2040, and S3069 each carry O-(pantetheine 4'-phosphoryl)serine.

Belongs to the ATP-dependent AMP-binding enzyme family. Pantetheine 4'-phosphate serves as cofactor.

It functions in the pathway antibiotic biosynthesis; surfactin biosynthesis. This protein is a multifunctional enzyme able to activate and polymerize the amino acids Leu, Glu, Asp and Val. Activation sites for these AA consist of individual domains. This is Surfactin synthase subunit 2 (srfAB) from Bacillus subtilis (strain 168).